Reading from the N-terminus, the 215-residue chain is UPF0502 protein YceH (215 aa).

Belongs to the UPF0502 family.

The polypeptide is UPF0502 protein YceH (Salmonella schwarzengrund (strain CVM19633)).